The following is a 671-amino-acid chain: Probable boron transporter 6 (671 aa).

The Cytoplasmic portion of the chain corresponds to 1 to 37; sequence MKSEGESGPFQGILRDIEGRRKCYKQDWIRGIKTGIR. Residues 38–58 form a helical membrane-spanning segment; that stretch reads ILAPTCYIFFASSLPVVAFGE. Residues 59–77 are Extracellular-facing; it reads QLSKHTGGALSAVETLAST. Residues 78–98 form a helical membrane-spanning segment; that stretch reads SICGIIHAIFGGQPLLIVGVA. The Cytoplasmic portion of the chain corresponds to 99–123; it reads EPTIIMYTYLYSFCISRPDIGRELY. The helical transmembrane segment at 124–144 threads the bilayer; that stretch reads LAWVAWVCVWTSVLLILLSIF. At 145-157 the chain is on the extracellular side; it reads NAGTIITRFTRIA. A helical transmembrane segment spans residues 158 to 178; it reads GELFGMLIAVLFLQEAIKGLI. The Cytoplasmic segment spans residues 179–195; sequence SEFHAPEIKNQETGKSH. Residues 196 to 216 form a helical membrane-spanning segment; it reads FLLIYANGLLAVIFSLGLLIT. Residues 217–235 lie on the Extracellular side of the membrane; it reads ALKSRRAKSWKYGFGWLRS. A helical membrane pass occupies residues 236–256; sequence FIGDYGVPLMVLLWTALSYTV. Topologically, residues 257–291 are cytoplasmic; sequence PSEVLPSVPRRLFCPLPWEPASLYHWTVVKDMGKV. Residues 292–312 traverse the membrane as a helical segment; the sequence is PIMYILAAFIPGVMIAGLYFF. Over 313–332 the chain is Extracellular; sequence DHSVASQMAQQKEFNLKNPS. Residues 333 to 353 traverse the membrane as a helical segment; that stretch reads AYHYDIFLLGIITLICGLLGL. Residues 354 to 469 are Cytoplasmic-facing; the sequence is PPSNGVLPQA…EQRVSNLLQS (116 aa). Residues 470–490 traverse the membrane as a helical segment; it reads VLVGLTLLAVTVIKMIPSSVL. Topologically, residues 491-557 are extracellular; sequence WGYFAYMAID…QLVYFLLCYG (67 aa). A helical membrane pass occupies residues 558–578; that stretch reads MTWIPMAGIFFPALFFLLISI. The Cytoplasmic portion of the chain corresponds to 579 to 671; sequence REHLLPKLFD…EEKHVTFEPH (93 aa).

The protein belongs to the anion exchanger (TC 2.A.31.3) family.

Its subcellular location is the membrane. Functionally, probable boron transporter. Boron is essential for maintaining the integrity of plants cell walls. This chain is Probable boron transporter 6 (BOR6), found in Arabidopsis thaliana (Mouse-ear cress).